We begin with the raw amino-acid sequence, 181 residues long: Large ribosomal subunit protein uL5 (181 aa).

It belongs to the universal ribosomal protein uL5 family. As to quaternary structure, part of the 50S ribosomal subunit; contacts the 5S rRNA and probably tRNA. Forms a bridge to the 30S subunit in the 70S ribosome.

This is one of the proteins that bind and probably mediate the attachment of the 5S RNA into the large ribosomal subunit, where it forms part of the central protuberance. In the 70S ribosome it contacts protein S13 of the 30S subunit (bridge B1b), connecting the 2 subunits; this bridge is implicated in subunit movement. May contact the P site tRNA; the 5S rRNA and some of its associated proteins might help stabilize positioning of ribosome-bound tRNAs. This is Large ribosomal subunit protein uL5 from Methanococcus maripaludis (strain C7 / ATCC BAA-1331).